A 173-amino-acid polypeptide reads, in one-letter code: Photosystem I assembly protein Ycf3 (173 aa).

3 TPR repeats span residues 35–68 (AYIY…EENK), 72–105 (GETL…NPKQ), and 120–153 (GRNA…YPGG).

This sequence belongs to the Ycf3 family.

The protein localises to the cellular thylakoid membrane. In terms of biological role, essential for the assembly of the photosystem I (PSI) complex. May act as a chaperone-like factor to guide the assembly of the PSI subunits. The sequence is that of Photosystem I assembly protein Ycf3 from Prochlorococcus marinus (strain MIT 9312).